The primary structure comprises 308 residues: UDP-N-acetylenolpyruvoylglucosamine reductase (308 aa).

The 164-residue stretch at Arg24 to Gly187 folds into the FAD-binding PCMH-type domain. Arg167 is a catalytic residue. Residues Gln199–Ala230 form a disordered region. The segment covering Leu200 to Ser213 has biased composition (basic and acidic residues). A compositionally biased stretch (polar residues) spans Ala214–Gly228. Ser216 functions as the Proton donor in the catalytic mechanism. Residue Glu298 is part of the active site.

This sequence belongs to the MurB family. Requires FAD as cofactor.

The protein resides in the cytoplasm. It carries out the reaction UDP-N-acetyl-alpha-D-muramate + NADP(+) = UDP-N-acetyl-3-O-(1-carboxyvinyl)-alpha-D-glucosamine + NADPH + H(+). Its pathway is cell wall biogenesis; peptidoglycan biosynthesis. Its function is as follows. Cell wall formation. In Ruegeria pomeroyi (strain ATCC 700808 / DSM 15171 / DSS-3) (Silicibacter pomeroyi), this protein is UDP-N-acetylenolpyruvoylglucosamine reductase.